The primary structure comprises 96 residues: MSDFEIIVGISSLLQVIILNIQNMLEVLLEYIGIHKRRVDISTYYDNVYFFFHFICYHLLSYCIINLRISASFICDSCSLIIMSPSYAVCDNILVT.

The chain crosses the membrane as a helical span at residues 1–21 (MSDFEIIVGISSLLQVIILNI).

It is found in the membrane. This is an uncharacterized protein from Saccharomyces cerevisiae (strain ATCC 204508 / S288c) (Baker's yeast).